Consider the following 366-residue polypeptide: GDSL esterase/lipase At1g74460 (366 aa).

An N-terminal signal peptide occupies residues 1 to 20; it reads MKFCAIFVLFIVLAINGYDC. The active-site Nucleophile is the Ser30. N-linked (GlcNAc...) asparagine glycosylation is found at Asn113 and Asn260. Residues Asp320 and His323 contribute to the active site.

It belongs to the 'GDSL' lipolytic enzyme family.

It is found in the secreted. The polypeptide is GDSL esterase/lipase At1g74460 (Arabidopsis thaliana (Mouse-ear cress)).